A 228-amino-acid chain; its full sequence is MGPMRTIVYADGGCDPNPGPGGWAAVIQAPTGTIELYGGELATTNNRMELTAAIRALEHFPEGAAIEMRCDSQYVVKSVTEWMRGWKARGWRTATGPVKNIDLMQRLDALAAARDVRWTWVRGHAGEAGNERADRLATLGRREALSGKTSGEAMPLPADAAPALAPAQPVQSKTVQVALSADLANALSRAAGRAGITPQAYLEDAVRLALELKPPGVARVRAELQKAS.

Residues 2-142 (GPMRTIVYAD…ADRLATLGRR (141 aa)) form the RNase H type-1 domain. Mg(2+) is bound by residues Asp-11, Glu-49, Asp-71, and Asp-134.

This sequence belongs to the RNase H family. Monomer. The cofactor is Mg(2+).

It localises to the cytoplasm. It carries out the reaction Endonucleolytic cleavage to 5'-phosphomonoester.. Its function is as follows. Endonuclease that specifically degrades the RNA of RNA-DNA hybrids. This chain is Ribonuclease H, found in Methylorubrum extorquens (strain PA1) (Methylobacterium extorquens).